The chain runs to 269 residues: 4-hydroxy-tetrahydrodipicolinate reductase (269 aa).

NAD(+) contacts are provided by residues 8–13 (GAGGRM) and glutamate 34. Residue arginine 35 coordinates NADP(+). NAD(+)-binding positions include 98–100 (GTT) and 122–125 (ASNY). The active-site Proton donor/acceptor is histidine 155. Histidine 156 serves as a coordination point for (S)-2,3,4,5-tetrahydrodipicolinate. Catalysis depends on lysine 159, which acts as the Proton donor. 165–166 (GT) is a (S)-2,3,4,5-tetrahydrodipicolinate binding site.

Belongs to the DapB family.

It is found in the cytoplasm. The catalysed reaction is (S)-2,3,4,5-tetrahydrodipicolinate + NAD(+) + H2O = (2S,4S)-4-hydroxy-2,3,4,5-tetrahydrodipicolinate + NADH + H(+). It carries out the reaction (S)-2,3,4,5-tetrahydrodipicolinate + NADP(+) + H2O = (2S,4S)-4-hydroxy-2,3,4,5-tetrahydrodipicolinate + NADPH + H(+). It participates in amino-acid biosynthesis; L-lysine biosynthesis via DAP pathway; (S)-tetrahydrodipicolinate from L-aspartate: step 4/4. Catalyzes the conversion of 4-hydroxy-tetrahydrodipicolinate (HTPA) to tetrahydrodipicolinate. This Haemophilus ducreyi (strain 35000HP / ATCC 700724) protein is 4-hydroxy-tetrahydrodipicolinate reductase.